A 335-amino-acid polypeptide reads, in one-letter code: Phosphate acyltransferase (335 aa).

The protein belongs to the PlsX family. In terms of assembly, homodimer. Probably interacts with PlsY.

The protein localises to the cytoplasm. It carries out the reaction a fatty acyl-[ACP] + phosphate = an acyl phosphate + holo-[ACP]. The protein operates within lipid metabolism; phospholipid metabolism. Catalyzes the reversible formation of acyl-phosphate (acyl-PO(4)) from acyl-[acyl-carrier-protein] (acyl-ACP). This enzyme utilizes acyl-ACP as fatty acyl donor, but not acyl-CoA. This chain is Phosphate acyltransferase, found in Streptococcus uberis (strain ATCC BAA-854 / 0140J).